Here is a 113-residue protein sequence, read N- to C-terminus: Ribulose bisphosphate carboxylase small subunit (113 aa).

This sequence belongs to the RuBisCO small chain family. Heterohexadecamer of 8 large and 8 small subunits.

It is found in the carboxysome. Functionally, ruBisCO catalyzes two reactions: the carboxylation of D-ribulose 1,5-bisphosphate, the primary event in carbon dioxide fixation, as well as the oxidative fragmentation of the pentose substrate in the photorespiration process. Both reactions occur simultaneously and in competition at the same active site. Although the small subunit is not catalytic it is essential for maximal activity. The polypeptide is Ribulose bisphosphate carboxylase small subunit (Synechococcus sp. (strain WH7803)).